The primary structure comprises 435 residues: Tol-Pal system protein TolB (435 aa).

A signal peptide spans 1-24; it reads MIPMPKMIRSLLLLFCLLPLGAQA.

The protein belongs to the TolB family. As to quaternary structure, the Tol-Pal system is composed of five core proteins: the inner membrane proteins TolA, TolQ and TolR, the periplasmic protein TolB and the outer membrane protein Pal. They form a network linking the inner and outer membranes and the peptidoglycan layer.

The protein resides in the periplasm. Functionally, part of the Tol-Pal system, which plays a role in outer membrane invagination during cell division and is important for maintaining outer membrane integrity. The protein is Tol-Pal system protein TolB of Thioalkalivibrio sulfidiphilus (strain HL-EbGR7).